The following is a 195-amino-acid chain: Imidazoleglycerol-phosphate dehydratase (195 aa).

Belongs to the imidazoleglycerol-phosphate dehydratase family.

The protein resides in the cytoplasm. The enzyme catalyses D-erythro-1-(imidazol-4-yl)glycerol 3-phosphate = 3-(imidazol-4-yl)-2-oxopropyl phosphate + H2O. It functions in the pathway amino-acid biosynthesis; L-histidine biosynthesis; L-histidine from 5-phospho-alpha-D-ribose 1-diphosphate: step 6/9. The protein is Imidazoleglycerol-phosphate dehydratase of Burkholderia cenocepacia (strain HI2424).